The chain runs to 165 residues: Urease accessory protein UreE (165 aa).

Belongs to the UreE family.

Its subcellular location is the cytoplasm. In terms of biological role, involved in urease metallocenter assembly. Binds nickel. Probably functions as a nickel donor during metallocenter assembly. The sequence is that of Urease accessory protein UreE from Flavobacterium johnsoniae (strain ATCC 17061 / DSM 2064 / JCM 8514 / BCRC 14874 / CCUG 350202 / NBRC 14942 / NCIMB 11054 / UW101) (Cytophaga johnsonae).